Here is a 119-residue protein sequence, read N- to C-terminus: Beta-2-microglobulin (119 aa).

A signal peptide spans 1–20 (MARTVATFFLMLVSLACLDA). Residues 25–114 (PQVQVYTRHP…VTLKEPKVVT (90 aa)) form the Ig-like C1-type domain. A disulfide bridge connects residues C45 and C100.

Belongs to the beta-2-microglobulin family. As to quaternary structure, heterodimer of an alpha chain and a beta chain. Beta-2-microglobulin is the beta-chain of major histocompatibility complex class I molecules.

It is found in the secreted. Component of the class I major histocompatibility complex (MHC). Involved in the presentation of peptide antigens to the immune system. This is Beta-2-microglobulin (B2M) from Sigmodon hispidus (Hispid cotton rat).